Consider the following 1390-residue polypeptide: MSDNSSNQFLLLLAAAQQQQQQQLLQQQLAKIQKATASSPSKSTNGTSASTSAVPSTSGTSSSQNEAAQLQNLAKMQQIQQLAQFGALMAAQKKQQEKAAADKAKEKEKEKQKAAAAAAAAAAKASASTSSASAIPGLSPEMLAAWQQAIQMQALQQMMMTPQKSQMEEAIKKMMDMAKKKPAGVASTSSASTSSSTPSTSSASITSSNNNAANNAASNMMNNVMWQLVAAQMQQKQQQQQKDTQKKADQAKKAKELAKQQQKEQDVKNKQQEEILKFLMAQHQLNHQKKHEKKQADAAALAAKVLAAHRAALESDSPEEGKKTNEAMLRLPLQLGWRRQTCVRSIASAGVKGDVSYFAPCGKKLSTYSEVVRYLTKNSIHYITRDNFLFNTKLVIGEFIVPKQTEADETQQEREFAMFTEDDINKELTRLNVLKFVPKIQASTSNGVHEDDIKMSKIEEPDEPLDPSELNDEFTEELVHSQIMSNGVDECKIREREADDLLVNINDVRHLPDFSRIGNQCLSSQGFADALMVHEFVQNFGHVLGIDLEIAPKLESLCAGLDGDANHAEQTLQLTRQLLRLALEFPGMGNEKRFGQGGGEMGLDRENFSEVMRLFLIDKGKRGEELSQPLLTCNFLSISPEQKASILAFLCDELVCSRNVVTEIDKNLDEISRLKGEKWMREGKARALRSARSKKKNDEKVVVVKEEQNHESDSEPPTRPDTPKKATVAPPTVVSVSPVSAAQQQQRKFTPGLGQCEVLTEQEESMSLQQMDSLIGDLHQEAQNINQKIHDTGLKIRSFPFGTDRFHRNYWMLAHTDKVIIESLATTSVNNPACNANEYASKDPPTLEQRVPGACETIDLDVIACVEDLVDDVVLLRAKADKKTRKRYRRIENHMKRGWWTMQNRDCVESLRSCMLSRGIRERALHRLLTKPWFLNELKFGTITIEPVGEKSDLELVRRQGWTRLNTAIDKLQCHLKMSDVSKPLPSITPFETQKPIVVPPTMALAQIVKDDMAWKVIDEEVDGQELDETIIRQKIIETADMVQPKFWRPKFQKLEDQDTCQLFEDWKSYVSTEAQTTSQLMVALQTLEGMIMWERSSREALCQICKSMDGDEMLVCDGCESGCHMECFRPRMTKVPEGDWFCQRCREEKSGRPMCMFCSRETGNLHQCQRCAYHVHQECSQDGPKEAINPETFICGHCQEMKQMRFVKRLILRSESEERELEDDNHAENGENTKNGHMNGMNGAIAIGVHNQQNGVKGNLKRKLEVPSIGGLPKNMNKELCQLMLDELVVQANALPFLEPVNPKLVPGYKMIISKPMDLKTIRQKNEKLIYETPEDFAEDIELMFANCRQFNIDHSEIGRAGISLHKFFQKRWKQLKYNFTKRLRRLHR.

3 disordered regions span residues 30–67, 178–215, and 235–269; these read AKIQ…QNEA, AKKK…AANN, and QKQQ…DVKN. A compositionally biased stretch (polar residues) spans 35 to 45; sequence ATASSPSKSTN. Low complexity-rich tracts occupy residues 46 to 63 and 186 to 215; these read GTSA…TSSS and ASTS…AANN. Basic and acidic residues predominate over residues 243-269; that stretch reads DTQKKADQAKKAKELAKQQQKEQDVKN. The MBD domain occupies 323-395; sequence KTNEAMLRLP…DNFLFNTKLV (73 aa). The 65-residue stretch at 524–588 folds into the DDT domain; that stretch reads SQGFADALMV…LRLALEFPGM (65 aa). Positions 705 to 724 are enriched in basic and acidic residues; sequence KEEQNHESDSEPPTRPDTPK. The tract at residues 705–729 is disordered; it reads KEEQNHESDSEPPTRPDTPKKATVA. The PHD-type zinc-finger motif lies at 1100-1149; sequence EALCQICKSMDGDEMLVCDGCESGCHMECFRPRMTKVPEGDWFCQRCREE. Residues 1218-1241 are disordered; sequence EERELEDDNHAENGENTKNGHMNG. In terms of domain architecture, Bromo spans 1273 to 1377; it reads LPKNMNKELC…KFFQKRWKQL (105 aa).

It belongs to the WAL family. In terms of assembly, interacts with set-6. As to expression, broadly expressed in the nervous system, including head, body and tail neurons.

It localises to the nucleus. It is found in the chromosome. In terms of biological role, chromatin reader protein, involved in positively modulating the rate of age-related behavioral deterioration. Positively modulates the level of global trimethylated 'Lys-9' of histone H3 (H3K9me3), but not of H3K9me2 or H3K9me1. May repress the expression of mitochondrial function-related genes by occupying their promoter regions, working in concert with histone methyltransferase, set-6. Involved in modulation of the mitochondrial unfolded protein response (UPR). Negatively regulates expression of bas-1, a serotonin (5-HT) and dopamine synthesizing enzyme (DOPA decarboxylase), with aging. Negatively modulates levels of endogenous 5-HT and dopamine with aging. Involved in modulating longevity, probably as a result of enhanced stress resistance via mechanisms related to dietary restriction and mitochondrial function. The sequence is that of Bromodomain adjacent to zinc finger domain protein 2 from Caenorhabditis elegans.